We begin with the raw amino-acid sequence, 125 residues long: Large ribosomal subunit protein bL17 (125 aa).

The protein belongs to the bacterial ribosomal protein bL17 family. In terms of assembly, part of the 50S ribosomal subunit. Contacts protein L32.

The chain is Large ribosomal subunit protein bL17 from Acinetobacter baylyi (strain ATCC 33305 / BD413 / ADP1).